Reading from the N-terminus, the 406-residue chain is Peptidase T (406 aa).

His-81 contacts Zn(2+). Residue Asp-83 is part of the active site. Residue Asp-142 coordinates Zn(2+). The active-site Proton acceptor is the Glu-176. Positions 177, 199, and 381 each coordinate Zn(2+).

This sequence belongs to the peptidase M20B family. Requires Zn(2+) as cofactor.

It localises to the cytoplasm. The enzyme catalyses Release of the N-terminal residue from a tripeptide.. In terms of biological role, cleaves the N-terminal amino acid of tripeptides. The protein is Peptidase T of Streptococcus suis (strain 98HAH33).